The following is a 199-amino-acid chain: Small ribosomal subunit protein uS4 (199 aa).

The region spanning R106–I170 is the S4 RNA-binding domain. Positions P177–E199 are disordered.

This sequence belongs to the universal ribosomal protein uS4 family. As to quaternary structure, part of the 30S ribosomal subunit. Contacts protein S5. The interaction surface between S4 and S5 is involved in control of translational fidelity.

Functionally, one of the primary rRNA binding proteins, it binds directly to 16S rRNA where it nucleates assembly of the body of the 30S subunit. With S5 and S12 plays an important role in translational accuracy. The sequence is that of Small ribosomal subunit protein uS4 from Thermoplasma acidophilum (strain ATCC 25905 / DSM 1728 / JCM 9062 / NBRC 15155 / AMRC-C165).